The sequence spans 69 residues: Conotoxin reg3f (69 aa).

An N-terminal signal peptide occupies residues Met-1–Ala-20. A propeptide spanning residues Leu-21–Arg-52 is cleaved from the precursor. 3 disulfide bridges follow: Cys-54–Cys-68, Cys-55–Cys-66, and Cys-60–Cys-69. Cys-69 carries the post-translational modification Cysteine amide.

Expressed by the venom duct.

It is found in the secreted. In Conus regius (Crown cone), this protein is Conotoxin reg3f.